A 365-amino-acid polypeptide reads, in one-letter code: Probable caffeine synthase 4 (365 aa).

An S-adenosyl-L-homocysteine-binding site is contributed by Y18. Caffeine is bound at residue T25. Residues C61, N66, D98, L99, S134, and F135 each contribute to the S-adenosyl-L-homocysteine site. Residues Y152, H155, and W156 each contribute to the caffeine site. Residues N173, D259, F261, and N262 each contribute to the Mg(2+) site. Position 317 (F317) interacts with caffeine.

Belongs to the methyltransferase superfamily. Type-7 methyltransferase family. Mg(2+) serves as cofactor.

It participates in alkaloid biosynthesis. Its function is as follows. May be involved in the biosynthesis of caffeine. In Camellia sinensis (Tea plant), this protein is Probable caffeine synthase 4.